Consider the following 189-residue polypeptide: Elongation factor P (189 aa).

This sequence belongs to the elongation factor P family.

It localises to the cytoplasm. Its pathway is protein biosynthesis; polypeptide chain elongation. Its function is as follows. Involved in peptide bond synthesis. Stimulates efficient translation and peptide-bond synthesis on native or reconstituted 70S ribosomes in vitro. Probably functions indirectly by altering the affinity of the ribosome for aminoacyl-tRNA, thus increasing their reactivity as acceptors for peptidyl transferase. This Pseudomonas syringae pv. syringae (strain B728a) protein is Elongation factor P.